We begin with the raw amino-acid sequence, 96 residues long: Co-chaperonin GroES (96 aa).

The protein belongs to the GroES chaperonin family. As to quaternary structure, heptamer of 7 subunits arranged in a ring. Interacts with the chaperonin GroEL.

It localises to the cytoplasm. Functionally, together with the chaperonin GroEL, plays an essential role in assisting protein folding. The GroEL-GroES system forms a nano-cage that allows encapsulation of the non-native substrate proteins and provides a physical environment optimized to promote and accelerate protein folding. GroES binds to the apical surface of the GroEL ring, thereby capping the opening of the GroEL channel. In Methylobacillus flagellatus (strain ATCC 51484 / DSM 6875 / VKM B-1610 / KT), this protein is Co-chaperonin GroES.